The sequence spans 257 residues: Taurine import ATP-binding protein TauB (257 aa).

Residues 6–233 (LDKISIHYDG…RYAAGEPIRA (228 aa)) form the ABC transporter domain. Residue 38–45 (GRSGCGKT) participates in ATP binding.

It belongs to the ABC transporter superfamily. Taurine importer (TC 3.A.1.17.1) family. The complex is composed of two ATP-binding proteins (TauB), two transmembrane proteins (TauC) and a solute-binding protein (TauA).

The protein resides in the cell inner membrane. The catalysed reaction is taurine(out) + ATP + H2O = taurine(in) + ADP + phosphate + H(+). Part of the ABC transporter complex TauABC involved in taurine import. Responsible for energy coupling to the transport system. This chain is Taurine import ATP-binding protein TauB, found in Mesorhizobium japonicum (strain LMG 29417 / CECT 9101 / MAFF 303099) (Mesorhizobium loti (strain MAFF 303099)).